The primary structure comprises 265 residues: uncharacterized protein (265 aa).

At Ser-223 the chain carries Phosphoserine.

This is an uncharacterized protein from Saccharomyces cerevisiae (strain ATCC 204508 / S288c) (Baker's yeast).